A 254-amino-acid chain; its full sequence is 5-oxoprolinase subunit A (254 aa).

Belongs to the LamB/PxpA family. As to quaternary structure, forms a complex composed of PxpA, PxpB and PxpC.

It catalyses the reaction 5-oxo-L-proline + ATP + 2 H2O = L-glutamate + ADP + phosphate + H(+). Its function is as follows. Catalyzes the cleavage of 5-oxoproline to form L-glutamate coupled to the hydrolysis of ATP to ADP and inorganic phosphate. In Carboxydothermus hydrogenoformans (strain ATCC BAA-161 / DSM 6008 / Z-2901), this protein is 5-oxoprolinase subunit A.